Reading from the N-terminus, the 118-residue chain is Cysteine-rich and transmembrane domain-containing protein 1 (118 aa).

2 stretches are compositionally biased toward low complexity: residues 1–54 (MNYE…QGYP) and 64–74 (YTAQPGYQGYP). The interval 1-82 (MNYEQPPAYT…YPQPGPPTNT (82 aa)) is disordered. The helical transmembrane segment at 95-112 (SGEQACLATCWAALCCCC) threads the bilayer.

The protein belongs to the CYSTM1 family.

Its subcellular location is the membrane. The chain is Cysteine-rich and transmembrane domain-containing protein 1 (cystm1) from Danio rerio (Zebrafish).